Reading from the N-terminus, the 140-residue chain is MNRLLLAGWIFFILLSVCTESFSGMVVSQTVAFHFQPHPDLSQFLVMDFTELTVPEAFIQKIGHAFSFFVLTYLLWKQRGSIRSAAAGSFAFAFFTEVLQLFFSRNGCIRDVLIDAVGIGLFYGLYVLAKRRKQEMYEKY.

4 consecutive transmembrane segments (helical) span residues 4-24, 56-76, 84-104, and 109-129; these read LLLA…SFSG, EAFI…YLLW, SAAA…LFFS, and IRDV…YVLA.

The protein localises to the cell membrane. Its function is as follows. May be important for peptidoglycan remodeling. This is an uncharacterized protein from Bacillus subtilis (strain 168).